We begin with the raw amino-acid sequence, 541 residues long: Calcium-dependent protein kinase 26 (541 aa).

Residues 1–11 (MGQCCTGGGKA) show a composition bias toward gly residues. The segment at 1 to 74 (MGQCCTGGGK…AGPIGEVLER (74 aa)) is disordered. Gly-2 is lipidated: N-myristoyl glycine. Low complexity predominate over residues 38 to 67 (AKQQPCSPAAKAAATEAAAAASSSKKPAGP). The region spanning 83–341 (YSIGKELGRG…AFQVLNHPWI (259 aa)) is the Protein kinase domain. ATP-binding positions include 89 to 97 (LGRGQFGVT) and Lys-112. Asp-207 functions as the Proton acceptor in the catalytic mechanism. The interval 347–377 (APDVPLDNVVLNRLKQFRAMNQFKKAALRII) is autoinhibitory domain. EF-hand domains lie at 384–419 (EEIK…QGTK), 420–455 (FSDN…MNKM), 456–491 (DREE…QGLY), and 493–526 (ANEI…GSGC). Ca(2+) is bound by residues Asp-397, Asp-399, Ser-401, Thr-403, Glu-408, Asp-433, Asp-435, Asn-437, Glu-444, Asp-469, Asp-471, Ser-473, Tyr-475, Glu-480, Asp-504, Asn-506, Asp-508, Arg-510, and Glu-515.

Belongs to the protein kinase superfamily. Ser/Thr protein kinase family. CDPK subfamily. In terms of tissue distribution, specifically expressed in heading panicles, spikelets and mature pollen grains. Not expressed in vegetative tissues.

Its subcellular location is the membrane. It catalyses the reaction L-seryl-[protein] + ATP = O-phospho-L-seryl-[protein] + ADP + H(+). The enzyme catalyses L-threonyl-[protein] + ATP = O-phospho-L-threonyl-[protein] + ADP + H(+). Activated by calcium. Autophosphorylation may play an important role in the regulation of the kinase activity. Its function is as follows. May play a role in signal transduction pathways that involve calcium as a second messenger. The chain is Calcium-dependent protein kinase 26 from Oryza sativa subsp. japonica (Rice).